The sequence spans 138 residues: Small ribosomal subunit protein uS11c (138 aa).

Residues 1 to 23 (MAKTIPRIGSRKNGRIGSRKNTR) form a disordered region. Basic residues predominate over residues 9 to 23 (GSRKNGRIGSRKNTR).

This sequence belongs to the universal ribosomal protein uS11 family. Part of the 30S ribosomal subunit.

The protein localises to the plastid. It is found in the chloroplast. This is Small ribosomal subunit protein uS11c from Daucus carota (Wild carrot).